The following is a 505-amino-acid chain: Phosphomevalonate kinase, peroxisomal (505 aa).

N-acetylalanine is present on Ala2. A Peroxisomal targeting signal PTS2 motif is present at residues Asp57–Leu65. An ATP-binding site is contributed by Val177–Ala187.

It belongs to the GHMP kinase family. Mevalonate kinase subfamily.

The protein resides in the peroxisome. It carries out the reaction (R)-5-phosphomevalonate + ATP = (R)-5-diphosphomevalonate + ADP. It functions in the pathway isoprenoid biosynthesis; isopentenyl diphosphate biosynthesis via mevalonate pathway; isopentenyl diphosphate from (R)-mevalonate: step 2/3. The polypeptide is Phosphomevalonate kinase, peroxisomal (Arabidopsis thaliana (Mouse-ear cress)).